Consider the following 80-residue polypeptide: uncharacterized protein (80 aa).

To B.cereus similar ORF in glnR 5'region.

This is an uncharacterized protein from Bacillus cereus.